The sequence spans 422 residues: MLSASANMAAALRAAGALLREPLVHGSSRACQPWRCQSGAAVAATTEKVHHAKTTKPQAQPERRKPKTGILMLNMGGPETLGEVQDFLQRLFLDRDLMTLPIQNKLAPFIAKRRTPKIQEQYRRIGGGSPIKMWTSKQGEGMVKLLDELSPATAPHKYYIGFRYVHPLTEEAIEEMERDGLERAIAFTQYPQYSCSTTGSSLNAIYRYYNEVGQKPTMKWSTIDRWPTHPLLIQCFADHILKELNHFPEEKRSEVVILFSAHSLPMSVVNRGDPYPQEVGATVHKVMEKLGYPNPYRLVWQSKVGPVPWLGPQTDEAIKGLCERGRKNILLVPIAFTSDHIETLYELDIEYSQVLAQKCGAENIRRAESLNGNPLFSKALADLVHSHIQSNKLCSTQLSLNCPLCVNPVCRKTKSFFTSQQL.

The N-terminal 53 residues, 1-53 (MLSASANMAAALRAAGALLREPLVHGSSRACQPWRCQSGAAVAATTEKVHHAK), are a transit peptide targeting the mitochondrion. At lysine 56 the chain carries N6-acetyllysine. Arginine 114, tyrosine 122, and serine 129 together coordinate protoporphyrin IX. Lysine 137 carries the N6-succinyllysine modification. Cysteine 195 contacts [2Fe-2S] cluster. The active site involves histidine 229. Lysine 289 is subject to N6-acetyllysine; alternate. At lysine 289 the chain carries N6-succinyllysine; alternate. Aspartate 382 is an active-site residue. [2Fe-2S] cluster is bound by residues cysteine 402, cysteine 405, and cysteine 410. An N6-acetyllysine; alternate modification is found at lysine 414. At lysine 414 the chain carries N6-succinyllysine; alternate.

Belongs to the ferrochelatase family. Homodimer. Homotetramer. Interaction with PGRMC1; the interaction results in decreased FECH activity. Interacts with ABCB10 and SLC25A37; this interaction forms an oligomeric complex. Forms a complex with ABCB7 and ABCB10, where a dimeric FECH bridges ABCB7 and ABCB10 homodimers; this complex may be required for cellular iron homeostasis, mitochondrial function and heme biosynthesis. Interacts with ABCB7 and ABCB10. The cofactor is [2Fe-2S] cluster. Erythroid and hepatic cells.

The protein localises to the mitochondrion inner membrane. It carries out the reaction heme b + 2 H(+) = protoporphyrin IX + Fe(2+). It participates in porphyrin-containing compound metabolism; protoheme biosynthesis; protoheme from protoporphyrin-IX: step 1/1. In terms of biological role, catalyzes the ferrous insertion into protoporphyrin IX. The protein is Ferrochelatase, mitochondrial of Mus musculus (Mouse).